The chain runs to 454 residues: L-serine dehydratase 1 (454 aa).

This sequence belongs to the iron-sulfur dependent L-serine dehydratase family. The cofactor is [4Fe-4S] cluster. Post-translationally, activated by post-translational modification by a system involving at least three gene products. Activation is mimicked in vitro by iron and dithiothreitol. There is considerable evidence for a free-radical activation mechanism.

The enzyme catalyses L-serine = pyruvate + NH4(+). It participates in carbohydrate biosynthesis; gluconeogenesis. Functionally, also deaminates threonine, particularly when it is present in high concentration. This Escherichia coli (strain K12) protein is L-serine dehydratase 1 (sdaA).